Consider the following 198-residue polypeptide: Proteasome subunit beta type-2 (198 aa).

Belongs to the peptidase T1B family. In terms of assembly, the 26S proteasome consists of a 20S proteasome core and two 19S regulatory subunits. The 20S proteasome core is composed of 28 subunits that are arranged in four stacked rings, resulting in a barrel-shaped structure. The two end rings are each formed by seven alpha subunits, and the two central rings are each formed by seven beta subunits. The catalytic chamber with the active sites is on the inside of the barrel.

It is found in the cytoplasm. Its subcellular location is the nucleus. Functionally, non-catalytic component of the proteasome, a multicatalytic proteinase complex which is characterized by its ability to cleave peptides with Arg, Phe, Tyr, Leu, and Glu adjacent to the leaving group at neutral or slightly basic pH. The proteasome has an ATP-dependent proteolytic activity. The protein is Proteasome subunit beta type-2 (psmB2) of Dictyostelium discoideum (Social amoeba).